A 74-amino-acid polypeptide reads, in one-letter code: U3-agatoxin-Ao1b (74 aa).

Residues 1–20 (MKAAISLIIFFAILFVVIEA) form the signal peptide. Positions 21–34 (ISYEEGKELFQKER) are excised as a propeptide. Cystine bridges form between Cys-37–Cys-53, Cys-44–Cys-58, Cys-52–Cys-68, and Cys-60–Cys-66. Residue Ser-72 is modified to Serine amide.

This sequence belongs to the neurotoxin 07 (Beta/delta-agtx) family. 02 (aga-3) subfamily. As to expression, expressed by the venom gland.

The protein localises to the secreted. In terms of biological role, insecticidal neurotoxin that induces an irreversible spastic paralysis when injected into insects. Modifies presynaptic voltage-gated sodium channels (Nav), causing them to open at the normal resting potential of the nerve. This leads to spontaneous release of neurotransmitter and repetitive action potentials in motor neurons. The polypeptide is U3-agatoxin-Ao1b (Agelena orientalis (Funnel-web spider)).